Here is a 101-residue protein sequence, read N- to C-terminus: Ubiquitin-related modifier 1 homolog 1 (101 aa).

Gly-101 is subject to 1-thioglycine. Gly-101 participates in a covalent cross-link: Glycyl lysine isopeptide (Gly-Lys) (interchain with K-? in acceptor proteins).

It belongs to the URM1 family. Post-translationally, C-terminal thiocarboxylation occurs in 2 steps, it is first acyl-adenylated (-COAMP) via the hesA/moeB/thiF part of the MOCS3 homolog, then thiocarboxylated (-COSH) via the rhodanese domain of the MOCS3 homolog.

The protein localises to the cytoplasm. Its pathway is tRNA modification; 5-methoxycarbonylmethyl-2-thiouridine-tRNA biosynthesis. Functionally, acts as a sulfur carrier required for 2-thiolation of mcm(5)S(2)U at tRNA wobble positions of cytosolic tRNA(Lys), tRNA(Glu) and tRNA(Gln). Serves as sulfur donor in tRNA 2-thiolation reaction by being thiocarboxylated (-COSH) at its C-terminus by MOCS3. The sulfur is then transferred to tRNA to form 2-thiolation of mcm(5)S(2)U. Also acts as a ubiquitin-like protein (UBL) that is covalently conjugated via an isopeptide bond to lysine residues of target proteins. The thiocarboxylated form serves as substrate for conjugation and oxidative stress specifically induces the formation of UBL-protein conjugates. The chain is Ubiquitin-related modifier 1 homolog 1 from Arabidopsis thaliana (Mouse-ear cress).